The following is a 382-amino-acid chain: Galactokinase (382 aa).

Residue 34 to 37 participates in substrate binding; sequence EHTD. An ATP-binding site is contributed by 124–130; it reads GAGLSSS. Mg(2+)-binding residues include Ser130 and Glu162. The active-site Proton acceptor is the Asp174. Residue Tyr223 coordinates substrate.

The protein belongs to the GHMP kinase family. GalK subfamily.

Its subcellular location is the cytoplasm. The catalysed reaction is alpha-D-galactose + ATP = alpha-D-galactose 1-phosphate + ADP + H(+). Its pathway is carbohydrate metabolism; galactose metabolism. In terms of biological role, catalyzes the transfer of the gamma-phosphate of ATP to D-galactose to form alpha-D-galactose-1-phosphate (Gal-1-P). This Salmonella paratyphi B (strain ATCC BAA-1250 / SPB7) protein is Galactokinase.